Consider the following 1347-residue polypeptide: Spermatogenesis-associated protein 31A3 (1347 aa).

The helical transmembrane segment at 23–43 (PWVLDIFLTLVFALGFFFLLL) threads the bilayer. Disordered stretches follow at residues 55-87 (PSPS…GREC), 108-142 (HLDK…HEPM), 154-235 (SPDP…STLI), 373-397 (EQDT…GPQK), 627-658 (QDES…EAQK), 900-955 (RGIP…REAV), 1084-1161 (VHEE…PSVS), and 1313-1335 (KAVS…SHHH). Residues 60 to 82 (GKRKCPVGRRRRPRGRMKNHSLR) show a composition bias toward basic residues. Residues 165 to 178 (LASTPSPGPMTTSV) are compositionally biased toward polar residues. Over residues 198–211 (PEPPALFPHPPHTP) the composition is skewed to pro residues. Composition is skewed to polar residues over residues 627–651 (QDES…STGE) and 927–948 (LTYS…SSKA). Basic and acidic residues-rich tracts occupy residues 1108–1127 (HKSE…RLEG) and 1137–1146 (RKTEDTHQDE).

Belongs to the SPATA31 family.

The protein localises to the membrane. Functionally, may play a role in spermatogenesis. The sequence is that of Spermatogenesis-associated protein 31A3 (SPATA31A3) from Homo sapiens (Human).